The chain runs to 131 residues: Glycine cleavage system H protein (131 aa).

Positions 24 to 106 (RVTVGISDHA…YGDGWMYVVE (83 aa)) constitute a Lipoyl-binding domain. Lys65 is modified (N6-lipoyllysine).

Belongs to the GcvH family. The glycine cleavage system is composed of four proteins: P, T, L and H. The cofactor is (R)-lipoate.

The glycine cleavage system catalyzes the degradation of glycine. The H protein shuttles the methylamine group of glycine from the P protein to the T protein. In Stenotrophomonas maltophilia (strain R551-3), this protein is Glycine cleavage system H protein.